The sequence spans 329 residues: Flotillin-like protein FloA (329 aa).

Residues 4-24 traverse the membrane as a helical segment; that stretch reads IWGFLILILVLIFLGVFFSFV.

This sequence belongs to the flotillin-like FloA family. Homooligomerizes.

It is found in the cell membrane. It localises to the membrane raft. Found in functional membrane microdomains (FMM) that may be equivalent to eukaryotic membrane rafts. FMMs are highly dynamic and increase in number as cells age. Flotillins are thought to be important factors in membrane fluidity. The protein is Flotillin-like protein FloA of Dictyoglomus turgidum (strain DSM 6724 / Z-1310).